A 622-amino-acid chain; its full sequence is Cytochrome c oxidase subunit 1 (622 aa).

Over Met1–Ile27 the chain is Extracellular. The helical transmembrane segment at Ala28 to Ala46 threads the bilayer. At Met47–Glu68 the chain is on the cytoplasmic side. Residues Val69–Ala88 form a helical membrane-spanning segment. His73 serves as a coordination point for Fe(II)-heme a. Over Leu89–Ala110 the chain is Extracellular. Residues Leu111–Phe128 form a helical membrane-spanning segment. Residues Leu129 to Leu159 are Cytoplasmic-facing. The helical transmembrane segment at Gln160 to Ile178 threads the bilayer. Residues Asn179–Thr196 are Extracellular-facing. A helical membrane pass occupies residues Thr197–Leu215. Residues Ala216–Glu241 are Cytoplasmic-facing. The chain crosses the membrane as a helical span at residues His242 to Gly261. 2 residues coordinate Cu cation: His249 and Tyr253. Residues His249–Tyr253 constitute a cross-link (1'-histidyl-3'-tyrosine (His-Tyr)). Residues Ile262–Ala284 lie on the Extracellular side of the membrane. The helical transmembrane segment at Ile285–Gly304 threads the bilayer. 2 residues coordinate Cu cation: His298 and His299. Residues Leu305–Ile312 are Cytoplasmic-facing. The chain crosses the membrane as a helical span at residues Phe313 to Trp331. Residues Leu332–Met346 lie on the Extracellular side of the membrane. A helical membrane pass occupies residues Leu347 to Leu366. The Cytoplasmic segment spans residues Ala367–Gln374. A helical transmembrane segment spans residues Phe375–Val394. Residue His384 coordinates heme a3. A Fe(II)-heme a-binding site is contributed by His386. Residues Phe395–Ser421 lie on the Extracellular side of the membrane. Residues Phe422–Leu441 form a helical membrane-spanning segment. The Cytoplasmic segment spans residues Met442–Thr459. Residues Gly460–Leu479 traverse the membrane as a helical segment. Topologically, residues Val480–Asn552 are extracellular. Residues Gly553 to Leu572 traverse the membrane as a helical segment. Topologically, residues Tyr573–Gly580 are cytoplasmic. A helical membrane pass occupies residues Leu581–His604. At Gly605–Ala622 the chain is on the cytoplasmic side.

It belongs to the heme-copper respiratory oxidase family. Requires Cu(2+) as cofactor. Heme serves as cofactor.

The protein localises to the cell membrane. The catalysed reaction is 4 Fe(II)-[cytochrome c] + O2 + 8 H(+)(in) = 4 Fe(III)-[cytochrome c] + 2 H2O + 4 H(+)(out). Its pathway is energy metabolism; oxidative phosphorylation. Cytochrome c oxidase is the component of the respiratory chain that catalyzes the reduction of oxygen to water. Subunits 1-3 form the functional core of the enzyme complex. Co I is the catalytic subunit of the enzyme. Electrons originating in cytochrome c are transferred via the copper A center of subunit 2 and heme a of subunit 1 to the bimetallic center formed by heme a3 and copper B. This cytochrome c oxidase shows proton pump activity across the membrane in addition to the electron transfer. The chain is Cytochrome c oxidase subunit 1 (ctaD) from Bacillus subtilis (strain 168).